Here is a 399-residue protein sequence, read N- to C-terminus: MNIRPEIKTAFIVIILGIAIWILLTFPFRYGLDIRGGIRVTLQCQKTEGVEITDDAVRRTIEVIRNRIDQLGVTEPSIYKEGSDKIVVELPGIKDPERALEIIGQTALLEFKDETGKTILTGSALKNAKVEFDQVGQPMVRVEMNPEGAKIFADFTSKNVGKQVFIVLDGKVISNPVIKEPITEGTGVITGRFTIDEAQKLAILLRAGALPVPVKVIENRTIDPTLGKDTMESAYRAGVIGAILVVLFMILVFRFLGLVADIALLIYVVLDLAALKLLNATLTLPGVAGIILSIGMAVDANCLIFARMKEEYAQRKTPMASLDAGFRNALRAIIDSNVTTILAALILFYFGTGPIRGFAVTLSLGVALSMFTQITITRTLLENLLSLPVFKKATKLLGL.

A run of 6 helical transmembrane segments spans residues 7–27, 239–259, 262–282, 286–306, 329–351, and 357–381; these read IKTAFIVIILGIAIWILLTFP, VIGAILVVLFMILVFRFLGLV, IALLIYVVLDLAALKLLNATL, GVAGIILSIGMAVDANCLIFA, ALRAIIDSNVTTILAALILFYFG, and GFAVTLSLGVALSMFTQITITRTLL.

Belongs to the SecD/SecF family. SecD subfamily. Forms a complex with SecF. Part of the essential Sec protein translocation apparatus which comprises SecA, SecYEG and auxiliary proteins SecDF. Other proteins may also be involved.

The protein resides in the cell inner membrane. Functionally, part of the Sec protein translocase complex. Interacts with the SecYEG preprotein conducting channel. SecDF uses the proton motive force (PMF) to complete protein translocation after the ATP-dependent function of SecA. The chain is Protein translocase subunit SecD from Dictyoglomus turgidum (strain DSM 6724 / Z-1310).